A 65-amino-acid polypeptide reads, in one-letter code: uncharacterized protein (65 aa).

Residues 1-22 form the signal peptide; sequence MKFIKLFTFLVYLFVTLTNVFA.

This is an uncharacterized protein from Invertebrate iridescent virus 6 (IIV-6).